A 378-amino-acid chain; its full sequence is Alcohol dehydrogenase 1 (378 aa).

Cys-48 contacts Zn(2+). 49–53 (HTDVL) contacts NAD(+). Zn(2+) contacts are provided by His-69, Cys-99, Cys-102, Cys-105, Cys-113, and Cys-177. Residues 202–207 (GIGTVG), Asp-226, Lys-231, 274–276 (TGV), 297–299 (IGA), and 321–323 (TTF) each bind NAD(+).

The protein belongs to the zinc-containing alcohol dehydrogenase family. Class-IV subfamily. As to quaternary structure, homodimer. Zn(2+) serves as cofactor. Expressed in flowers and disk florets.

It functions in the pathway isoprenoid biosynthesis. The polypeptide is Alcohol dehydrogenase 1 (Tanacetum cinerariifolium (Dalmatian daisy)).